A 182-amino-acid polypeptide reads, in one-letter code: Large ribosomal subunit protein uL5 (182 aa).

Belongs to the universal ribosomal protein uL5 family. In terms of assembly, part of the 50S ribosomal subunit; part of the 5S rRNA/L5/L18/L25 subcomplex. Contacts the 5S rRNA and the P site tRNA. Forms a bridge to the 30S subunit in the 70S ribosome.

Functionally, this is one of the proteins that bind and probably mediate the attachment of the 5S RNA into the large ribosomal subunit, where it forms part of the central protuberance. In the 70S ribosome it contacts protein S13 of the 30S subunit (bridge B1b), connecting the 2 subunits; this bridge is implicated in subunit movement. Contacts the P site tRNA; the 5S rRNA and some of its associated proteins might help stabilize positioning of ribosome-bound tRNAs. This Borreliella afzelii (strain PKo) (Borrelia afzelii) protein is Large ribosomal subunit protein uL5.